We begin with the raw amino-acid sequence, 64 residues long: Conotoxin Tx3.5-a (64 aa).

A signal peptide spans 1–19 (MSKLGVLLTICLLLFPLTA). The propeptide occupies 20 to 47 (LPLDGDQPADQAAERMQAEQHPLFDQKR). 3 cysteine pairs are disulfide-bonded: C49-C58, C50-C62, and C54-C63. Position 63 is a cysteine amide (C63).

It belongs to the conotoxin M superfamily. Contains 3 disulfide bonds. In terms of processing, two peptides are produced from this precursor. Conotoxin Tx3.5-b is amidated at Cys-63, conotoxin Tx3.5-a has an unmodified C-terminus. In terms of tissue distribution, expressed by the venom duct. Is present in all duct parts with a highest content in part 2 (proximal of the venom bulb) and then decreases in concentration toward the end of the duct.

The protein localises to the secreted. The protein is Conotoxin Tx3.5-a of Conus textile (Cloth-of-gold cone).